A 148-amino-acid chain; its full sequence is Glutamate mutase sigma subunit 2 (148 aa).

Residues 1–134 (MRTVILGVIG…EALKADLGHR (134 aa)) enclose the B12-binding domain. Residues 11–15 (SDAHV), His14, 59–61 (SSL), and 90–94 (NLAVG) contribute to the adenosylcob(III)alamin site. A compositionally biased stretch (basic and acidic residues) spans 129–141 (ADLGHRSREEASS). Positions 129–148 (ADLGHRSREEASSEKVQLGS) are disordered.

This sequence belongs to the methylaspartate mutase GlmS subunit family. Heterotetramer composed of 2 epsilon subunits (GlmE) and 2 sigma subunits (GlmS). GlmE exists as a homodimer and GlmS as a monomer. Requires adenosylcob(III)alamin as cofactor.

It catalyses the reaction (2S,3S)-3-methyl-L-aspartate = L-glutamate. Its pathway is amino-acid degradation; L-glutamate degradation via mesaconate pathway; acetate and pyruvate from L-glutamate: step 1/4. In terms of biological role, catalyzes the carbon skeleton rearrangement of L-glutamate to L-threo-3-methylaspartate ((2S,3S)-3-methylaspartate). The sequence is that of Glutamate mutase sigma subunit 2 from Haloarcula marismortui (strain ATCC 43049 / DSM 3752 / JCM 8966 / VKM B-1809) (Halobacterium marismortui).